Here is a 456-residue protein sequence, read N- to C-terminus: IQ domain-containing protein IQM3 (456 aa).

Positions 46 to 75 (TRLAAVKVQKVYRSYRTRRRLADSVVVAEE) constitute an IQ domain. The segment at 315-358 (SEDSDSYDDYVKSNGGSEPEPLKKEDTTFQAETETDENGNGTVG) is disordered.

Expressed in roots, rosette and cauline leaves, flowers and siliques, and at lower levels in stems.

The protein resides in the cytoplasm. It localises to the nucleus. Its function is as follows. May be involved in biotic and abiotic stress responses. This Arabidopsis thaliana (Mouse-ear cress) protein is IQ domain-containing protein IQM3.